Here is a 171-residue protein sequence, read N- to C-terminus: MAEKRNIFLIGPMGAGKSTIGRHLADELHLEFYDSDQEIEKRTGADIAWIFDLEGEEGFRAREETVINDLTDKQGIVLATGGGSVVSKAVRNRLSARGIVVYLQTTIDKQVARTQRDKRRPLLQKDDPETVLRRLAEERNPMYEDAADYIVDTDEQSARAVANQIIEKINQ.

14–19 contacts ATP; the sequence is GAGKST. S18 lines the Mg(2+) pocket. The substrate site is built by D36, R60, and G82. R120 provides a ligand contact to ATP. R139 contacts substrate. Q156 serves as a coordination point for ATP.

Belongs to the shikimate kinase family. As to quaternary structure, monomer. The cofactor is Mg(2+).

The protein localises to the cytoplasm. It catalyses the reaction shikimate + ATP = 3-phosphoshikimate + ADP + H(+). Its pathway is metabolic intermediate biosynthesis; chorismate biosynthesis; chorismate from D-erythrose 4-phosphate and phosphoenolpyruvate: step 5/7. In terms of biological role, catalyzes the specific phosphorylation of the 3-hydroxyl group of shikimic acid using ATP as a cosubstrate. The sequence is that of Shikimate kinase from Pseudoalteromonas atlantica (strain T6c / ATCC BAA-1087).